The following is a 130-amino-acid chain: Small ribosomal subunit protein uS9 (130 aa).

It belongs to the universal ribosomal protein uS9 family.

In Salmonella paratyphi A (strain AKU_12601), this protein is Small ribosomal subunit protein uS9.